Reading from the N-terminus, the 187-residue chain is Ribosome-recycling factor (187 aa).

It belongs to the RRF family.

It localises to the cytoplasm. Responsible for the release of ribosomes from messenger RNA at the termination of protein biosynthesis. May increase the efficiency of translation by recycling ribosomes from one round of translation to another. In Roseobacter denitrificans (strain ATCC 33942 / OCh 114) (Erythrobacter sp. (strain OCh 114)), this protein is Ribosome-recycling factor.